The sequence spans 85 residues: Translation initiation factor IF-1 2 (85 aa).

One can recognise an S1-like domain in the interval Met-1–Leu-72.

The protein belongs to the IF-1 family. As to quaternary structure, component of the 30S ribosomal translation pre-initiation complex which assembles on the 30S ribosome in the order IF-2 and IF-3, IF-1 and N-formylmethionyl-tRNA(fMet); mRNA recruitment can occur at any time during PIC assembly.

The protein localises to the cytoplasm. Functionally, one of the essential components for the initiation of protein synthesis. Stabilizes the binding of IF-2 and IF-3 on the 30S subunit to which N-formylmethionyl-tRNA(fMet) subsequently binds. Helps modulate mRNA selection, yielding the 30S pre-initiation complex (PIC). Upon addition of the 50S ribosomal subunit IF-1, IF-2 and IF-3 are released leaving the mature 70S translation initiation complex. This chain is Translation initiation factor IF-1 2, found in Paracidovorax citrulli (strain AAC00-1) (Acidovorax citrulli).